Here is a 299-residue protein sequence, read N- to C-terminus: MKPDAHQVKQFLLNLQDTICQQLTAVDGAEFVEDSWQREAGGGGRSRVLRNGGVFEQAGVNFSHVHGEAMPASATAHRPELAGRSFEAMGVSLVVHPHNPYVPTSHANVRFFIAEKPGAEPVWWFGGGFDLTPFYGFEEDAIHWHRTARDLCQPFGEDVYPRYKKWCDDYFYLKHRNEQRGIGGLFFDDLNTPDFDHCFAFMQAVGKGYTDAYLPIVERRKAMAYGERERNFQLYRRGRYVEFNLVWDRGTLFGLQTGGRTESILMSMPPLVRWEYDYQPKDGSPEAALSEFIKVRDWG.

Residue Ser-92 coordinates substrate. Residues His-96 and His-106 each coordinate a divalent metal cation. Residue His-106 is the Proton donor of the active site. Residue 108-110 (NVR) coordinates substrate. A divalent metal cation contacts are provided by His-145 and His-175. Positions 240-275 (YVEFNLVWDRGTLFGLQTGGRTESILMSMPPLVRWE) are important for dimerization. 258-260 (GGR) lines the substrate pocket.

Belongs to the aerobic coproporphyrinogen-III oxidase family. Homodimer. It depends on a divalent metal cation as a cofactor.

It is found in the cytoplasm. The enzyme catalyses coproporphyrinogen III + O2 + 2 H(+) = protoporphyrinogen IX + 2 CO2 + 2 H2O. It functions in the pathway porphyrin-containing compound metabolism; protoporphyrin-IX biosynthesis; protoporphyrinogen-IX from coproporphyrinogen-III (O2 route): step 1/1. Involved in the heme biosynthesis. Catalyzes the aerobic oxidative decarboxylation of propionate groups of rings A and B of coproporphyrinogen-III to yield the vinyl groups in protoporphyrinogen-IX. In Shigella flexneri, this protein is Oxygen-dependent coproporphyrinogen-III oxidase.